The sequence spans 41 residues: Photosystem I reaction center subunit IX (41 aa).

The helical transmembrane segment at 7–27 threads the bilayer; that stretch reads YLSTAPVITAIWLGITAGILI.

It belongs to the PsaJ family.

Its subcellular location is the cellular thylakoid membrane. Its function is as follows. May help in the organization of the PsaE and PsaF subunits. This Cyanothece sp. (strain PCC 7425 / ATCC 29141) protein is Photosystem I reaction center subunit IX.